Consider the following 496-residue polypeptide: NADP-dependent glyceraldehyde-3-phosphate dehydrogenase (496 aa).

Substrate-binding positions include Arg-116 and 169 to 170; that span reads NY. NADP(+) contacts are provided by Lys-192, Thr-195, and Asp-230. Residue 245–249 coordinates NAD(+); that stretch reads GGDTG. The active-site Proton acceptor is the Glu-264. 297 to 299 serves as a coordination point for substrate; that stretch reads RCT. Cys-298 acts as the Nucleophile in catalysis. Glu-391 provides a ligand contact to NADP(+). Position 451 (Arg-451) interacts with substrate.

It belongs to the aldehyde dehydrogenase family.

Its subcellular location is the cytoplasm. The enzyme catalyses D-glyceraldehyde 3-phosphate + NADP(+) + H2O = (2R)-3-phosphoglycerate + NADPH + 2 H(+). Functionally, important as a means of generating NADPH for biosynthetic reactions. The sequence is that of NADP-dependent glyceraldehyde-3-phosphate dehydrogenase (GAPN) from Pisum sativum (Garden pea).